The primary structure comprises 135 residues: Sex-regulated protein janus-A (135 aa).

Position 37 (Lys37) interacts with substrate. The active-site Proton acceptor is the His63. Position 104 to 106 (104 to 106 (SQG)) interacts with substrate.

It belongs to the janus family. As to expression, somatic and germline cells. Isoform B is expressed in both sexes and in somatic and germ line cells. Isoform A is expressed in males and is germ line specific.

In terms of biological role, janA and janB regulate somatic sex differentiation. In Drosophila melanogaster (Fruit fly), this protein is Sex-regulated protein janus-A (janA).